The sequence spans 1296 residues: MSNDSSLGLMQIGLATADQIRGWSYGEVKKPETINYRTLKPEKDGLFCEKIFGPTRDWECYCGKYKRVRYKGIICERCGVEVTRAKVRRERMGHIELAAPVTHIWYFKGVPSRLGYLLDLAPKDLEKVIYFAAYMITSVDEQARHDDLPNLQAAIDREKKQLEDTRDADINAIARDLENDLARVEEEGGKAAEKRKLRDSADRQMANVRKRADREIDYLEKVWDRFKNLKVNDLEGDEALYRQMVDRYGMYFEGSMGAESIKKRLETFDLAAEAEALRETIATGKGQRKTRALKRLKVVNAFLTTDNSPLGMVLDAVPVIPPELRPMVQLDGGRFATSDLNDLYRRVINRNNRLKRLLDLGAPEIIVNNEKRMLQEAVDSLFDNGRRGRPVTGPGNRALKSLSDMLKGKQGRFRQNLLGKRVDYSGRSVIVVGPQLKLHQCGLPKQMALELFKPFVMKRLVDLNHAQNIKSAKRMVERYRPQVWDVLEEVITEHPVLLNRAPTLHRLGIQAFEPQLVEGKAIQLHPLVCGAFNADFDGDQMAVHLPLSPEAQAEARVLMLSSNNILKPSDGKPIALPSQDMIIGLYHLTTVREGWAGEGNTYSSVAEAIMANDSGELHLNAKCKIRLEDFVPYAGWEAPEGWEPGQPAVVETTLGRVLFNETLPEDYPWDENVADKKHLSALVNDLAERYPMTRVAKTLDNLKDAGFHWASRSGVTVAISDIATPPEKPAIMEGYEAQAARIQGQYDKGLIDDDERRSELIDIWSKATDEVAQAMRDNLEPTNTINRMVSSGARGNWMQVRQIAGIRGLVANPKGEIMPRPIKSSYREGLSVLEYFIATHGARKGLADTALRTANSGYLTRRLVDVSQDVIVRESDCQTVRGLTLPLSDITDTGVRTLSEDVENTVHGRVLASAVADENGEVLAEAGADMSDAMIEKLYAAGVDQVRVRSVLTCESAVGVCAACYGRSLATNQLVDIGEAVGIVAAQSIGEPGTQLTMRTFHTGGVASSDGDITQGLPRIQELFEARTPKGVAPISEVAGRIRIEDTDKSLKIVVVPDNGDEEFAYPVLRRAKLLVADGDHVDVGQQLVTGAVDPKEVLRIRGPREAQKHLVDEVQGVYRSQGVGIHDKHVEVIVRQMLRRVTIIESGDTSLLPGELVDNVRFLEANRGAVAEGKRPAAGRPELMGITKASLATDSWLSAASFQETTRVLTQAAMEGKSDPLLGLKENVIIGKLIPAGTGLDRYNSVDVEPTEEAKAQMFTDPSAFADFSYAEENAGGLGSEFQAIPLDDYDFGGN.

The Zn(2+) site is built by Cys-60, Cys-62, Cys-75, and Cys-78. Over residues 185-202 (EEEGGKAAEKRKLRDSAD) the composition is skewed to basic and acidic residues. The interval 185-204 (EEEGGKAAEKRKLRDSADRQ) is disordered. Positions 535, 537, and 539 each coordinate Mg(2+). 4 residues coordinate Zn(2+): Cys-877, Cys-954, Cys-961, and Cys-964.

This sequence belongs to the RNA polymerase beta' chain family. In terms of assembly, the RNAP catalytic core consists of 2 alpha, 1 beta, 1 beta' and 1 omega subunit. When a sigma factor is associated with the core the holoenzyme is formed, which can initiate transcription. Mg(2+) serves as cofactor. Zn(2+) is required as a cofactor.

The enzyme catalyses RNA(n) + a ribonucleoside 5'-triphosphate = RNA(n+1) + diphosphate. In terms of biological role, DNA-dependent RNA polymerase catalyzes the transcription of DNA into RNA using the four ribonucleoside triphosphates as substrates. This Kocuria rhizophila (strain ATCC 9341 / DSM 348 / NBRC 103217 / DC2201) protein is DNA-directed RNA polymerase subunit beta'.